Consider the following 223-residue polypeptide: uncharacterized protein (223 aa).

This sequence to M.jannaschii MJ0575.

This is an uncharacterized protein from Methanocaldococcus jannaschii (strain ATCC 43067 / DSM 2661 / JAL-1 / JCM 10045 / NBRC 100440) (Methanococcus jannaschii).